We begin with the raw amino-acid sequence, 222 residues long: Large ribosomal subunit protein mL64 (222 aa).

Disordered stretches follow at residues 1-51 (MAAP…PRWQ), 136-170 (RRQQ…HVDP), and 182-222 (LEKQ…TPDS). Residues 141–170 (ARREKAQADKERRARLQAEAQERLGYHVDP) are compositionally biased toward basic and acidic residues. Positions 144–213 (EKAQADKERR…AAMAAAAAQD (70 aa)) form a coiled coil. The Nuclear localization signal motif lies at 184–200 (KQHRKRLKEEKQRKKKE). Residues 203-212 (AAAMAAAAAQ) show a composition bias toward low complexity.

The protein belongs to the mitochondrion-specific ribosomal protein mL64 family. As to quaternary structure, component of the mitochondrial ribosome large subunit (39S) which comprises a 16S rRNA and about 50 distinct proteins. Interacts with GADD45A, GADD45B and GADD45G. Interacts with NR4A1 via the NR4A1 AB domain. Interacts with ATAD3A and ATAD3B.

The protein localises to the mitochondrion. Its subcellular location is the nucleus. Its function is as follows. Acts as a negative regulator of G1 to S cell cycle phase progression by inhibiting cyclin-dependent kinases. Inhibitory effects are additive with GADD45 proteins but also occur in the absence of GADD45 proteins. Acts as a repressor of the orphan nuclear receptor NR4A1 by inhibiting AB domain-mediated transcriptional activity. May be involved in the hormone-mediated regulation of NR4A1 transcriptional activity. May play a role in mitochondrial protein synthesis. The sequence is that of Large ribosomal subunit protein mL64 (GADD45GIP1) from Bos taurus (Bovine).